The chain runs to 265 residues: Type III pantothenate kinase (265 aa).

An ATP-binding site is contributed by 9–16; sequence DAGNSRIK. Substrate contacts are provided by residues tyrosine 96 and 103–106; that span reads GSDR. The active-site Proton acceptor is the aspartate 105. Threonine 129 contacts ATP. Threonine 189 lines the substrate pocket.

Belongs to the type III pantothenate kinase family. As to quaternary structure, homodimer. NH4(+) serves as cofactor. The cofactor is K(+).

It is found in the cytoplasm. The enzyme catalyses (R)-pantothenate + ATP = (R)-4'-phosphopantothenate + ADP + H(+). It functions in the pathway cofactor biosynthesis; coenzyme A biosynthesis; CoA from (R)-pantothenate: step 1/5. Functionally, catalyzes the phosphorylation of pantothenate (Pan), the first step in CoA biosynthesis. This is Type III pantothenate kinase from Burkholderia orbicola (strain AU 1054).